Here is a 253-residue protein sequence, read N- to C-terminus: Tryptophan synthase alpha chain (253 aa).

Residues Glu45 and Asp56 each act as proton acceptor in the active site.

It belongs to the TrpA family. Tetramer of two alpha and two beta chains.

It catalyses the reaction (1S,2R)-1-C-(indol-3-yl)glycerol 3-phosphate + L-serine = D-glyceraldehyde 3-phosphate + L-tryptophan + H2O. Its pathway is amino-acid biosynthesis; L-tryptophan biosynthesis; L-tryptophan from chorismate: step 5/5. Its function is as follows. The alpha subunit is responsible for the aldol cleavage of indoleglycerol phosphate to indole and glyceraldehyde 3-phosphate. This Flavobacterium johnsoniae (strain ATCC 17061 / DSM 2064 / JCM 8514 / BCRC 14874 / CCUG 350202 / NBRC 14942 / NCIMB 11054 / UW101) (Cytophaga johnsonae) protein is Tryptophan synthase alpha chain.